Here is a 266-residue protein sequence, read N- to C-terminus: MADGEGGAASAPTAGTRPVYRRVLLKLGGEMFGGGHVGVDPDIVASIARQIAAVVAEGVQMAVVIGGGNFFRGAELSVRGMDRARSDYMGMLGTVMNCLALQDFLEKLGVDTRVQTAITMGQVAEPYIPRRAIRHMEKGRVVIFGAGLGAPYFSTDTTAAQRALEIGAEVVLMAKAVDGVYDSDPKTNADAVRFDHLDYDEVLARDLKFADATAISLCRDNGMPIIVFNLLEEGNIARAVHGEKIGTIVSSGDGVPPRRQAVSPAR.

26-29 (KLGG) contacts ATP. Glycine 67 provides a ligand contact to UMP. Residues glycine 68 and arginine 72 each coordinate ATP. UMP contacts are provided by residues aspartate 87 and 148–155 (LGAPYFST). The ATP site is built by tyrosine 181 and aspartate 184.

This sequence belongs to the UMP kinase family. As to quaternary structure, homohexamer.

The protein resides in the cytoplasm. It carries out the reaction UMP + ATP = UDP + ADP. The protein operates within pyrimidine metabolism; CTP biosynthesis via de novo pathway; UDP from UMP (UMPK route): step 1/1. Its activity is regulated as follows. Inhibited by UTP. Its function is as follows. Catalyzes the reversible phosphorylation of UMP to UDP. This chain is Uridylate kinase, found in Acidothermus cellulolyticus (strain ATCC 43068 / DSM 8971 / 11B).